A 490-amino-acid chain; its full sequence is Cobyric acid synthase (490 aa).

One can recognise a GATase cobBQ-type domain in the interval 252-439 (RLKVVVPVLP…LHGLFESTAA (188 aa)). Catalysis depends on cysteine 333, which acts as the Nucleophile. Histidine 431 is an active-site residue.

It belongs to the CobB/CobQ family. CobQ subfamily.

It participates in cofactor biosynthesis; adenosylcobalamin biosynthesis. In terms of biological role, catalyzes amidations at positions B, D, E, and G on adenosylcobyrinic A,C-diamide. NH(2) groups are provided by glutamine, and one molecule of ATP is hydrogenolyzed for each amidation. The chain is Cobyric acid synthase from Pseudomonas paraeruginosa (strain DSM 24068 / PA7) (Pseudomonas aeruginosa (strain PA7)).